The sequence spans 115 residues: Vitelline membrane protein Vm32E (115 aa).

Residues 1–17 (MKIVAFTLVAFVALAGA) form the signal peptide. One can recognise a VM domain in the interval 35–72 (GYPAPPCPTNYLFSCQPNLAPAPCAQEAPAYGSAGAYT).

It belongs to the vitelline membrane family.

The protein resides in the secreted. Functionally, major early eggshell protein. The chain is Vitelline membrane protein Vm32E from Drosophila yakuba (Fruit fly).